We begin with the raw amino-acid sequence, 289 residues long: ATP synthase mitochondrial F1 complex assembly factor 2 (289 aa).

Residues 1-40 constitute a mitochondrion transit peptide; that stretch reads MWRRCLRLRDVGRRLLNLPRSGLTASEGLGPKLPTPIRAY. K133 carries the post-translational modification N6-succinyllysine.

Belongs to the ATP12 family. As to quaternary structure, interacts with ATP5F1B; involved in the assembly of the F1 component of the mitochondrial ATP synthase (ATPase). Interacts with FMC1.

It is found in the mitochondrion inner membrane. In terms of biological role, plays a role in the assembly of the F1 component of the mitochondrial ATP synthase (ATPase). The protein is ATP synthase mitochondrial F1 complex assembly factor 2 (ATPAF2) of Bos taurus (Bovine).